Reading from the N-terminus, the 89-residue chain is Small ribosomal subunit protein uS17 (89 aa).

It belongs to the universal ribosomal protein uS17 family. Part of the 30S ribosomal subunit.

One of the primary rRNA binding proteins, it binds specifically to the 5'-end of 16S ribosomal RNA. The protein is Small ribosomal subunit protein uS17 of Azoarcus sp. (strain BH72).